A 430-amino-acid chain; its full sequence is Carbamoyl phosphate synthase arginine-specific small chain (430 aa).

The transit peptide at 1–9 (MLSATKRYL) directs the protein to the mitochondrion. The Glutamine amidotransferase type-1 domain maps to 219 to 407 (HIAVLDCGAK…FDNINVYKKS (189 aa)). The active-site Nucleophile is Cys296. Catalysis depends on residues His380 and Glu382.

It belongs to the CarA family. As to quaternary structure, heterodimer composed of 2 chains; the small (or glutamine) chain promotes the hydrolysis of glutamine to ammonia, which is used by the large (or ammonia) chain to synthesize carbamoyl phosphate.

The protein localises to the mitochondrion matrix. It catalyses the reaction hydrogencarbonate + L-glutamine + 2 ATP + H2O = carbamoyl phosphate + L-glutamate + 2 ADP + phosphate + 2 H(+). The catalysed reaction is L-glutamine + H2O = L-glutamate + NH4(+). It participates in amino-acid biosynthesis; L-arginine biosynthesis; carbamoyl phosphate from bicarbonate: step 1/1. Small subunit of the arginine-specific carbamoyl phosphate synthase (CPSase). CPSase catalyzes the formation of carbamoyl phosphate from the ammonia moiety of glutamine, carbonate, and phosphate donated by ATP, the first step of the arginine biosynthetic pathway. The small subunit (glutamine amidotransferase) binds and cleaves glutamine to supply the large subunit with the substrate ammonia. The polypeptide is Carbamoyl phosphate synthase arginine-specific small chain (CPA1) (Candida albicans (strain SC5314 / ATCC MYA-2876) (Yeast)).